A 358-amino-acid chain; its full sequence is Ion-translocating oxidoreductase complex subunit D (358 aa).

A run of 7 helical transmembrane segments spans residues 16–36 (VSRTMLTVVAALTPATLFGLW), 38–58 (FGWPAIFLFLTTVVSAWVFEV), 68–90 (IRPFATDGSAILSGWLVAMTLPP), 128–148 (AMLVVALPVQMTTWIAPVGLL), 206–226 (FVPGSLGETSTVLLALGGLLL), 236–256 (IPLAVLGTLVTLSAICSFLAP), and 286–306 (PVTTAGKWVYGIGIGTLVFVI).

Belongs to the NqrB/RnfD family. In terms of assembly, the complex is composed of six subunits: RnfA, RnfB, RnfC, RnfD, RnfE and RnfG. It depends on FMN as a cofactor.

It localises to the cellular chromatophore membrane. Its function is as follows. Part of a membrane-bound complex that couples electron transfer with translocation of ions across the membrane. Required for nitrogen fixation. Involved in electron transfer to nitrogenase. This Rhodobacter capsulatus (Rhodopseudomonas capsulata) protein is Ion-translocating oxidoreductase complex subunit D.